We begin with the raw amino-acid sequence, 652 residues long: DNA mismatch repair protein MutL (652 aa).

It belongs to the DNA mismatch repair MutL/HexB family.

This protein is involved in the repair of mismatches in DNA. It is required for dam-dependent methyl-directed DNA mismatch repair. May act as a 'molecular matchmaker', a protein that promotes the formation of a stable complex between two or more DNA-binding proteins in an ATP-dependent manner without itself being part of a final effector complex. This Aliivibrio salmonicida (strain LFI1238) (Vibrio salmonicida (strain LFI1238)) protein is DNA mismatch repair protein MutL.